A 113-amino-acid chain; its full sequence is MFIFNWFKSFFTDFFSTTPGEGVVPISNDYLPLTVVEYVYMGDGTVEAVTMTYEEAQEYYKNPWRWSTPTTSSNTQNTQSSSDSYDTNVPVHVWAGDSCGSSCDSSCSSTSCD.

The interval 66 to 85 (WSTPTTSSNTQNTQSSSDSY) is disordered. Low complexity predominate over residues 67-85 (STPTTSSNTQNTQSSSDSY).

This is an uncharacterized protein from Escherichia coli (Bacteriophage T4).